A 281-amino-acid polypeptide reads, in one-letter code: Leukocyte antigen CD37 (281 aa).

Topologically, residues 1–17 (MSAQESCLSLIKYFLFV) are cytoplasmic. The chain crosses the membrane as a helical span at residues 18 to 38 (FNLFFFVLGSLIFCFGIWILI). At 39–59 (DKTSFVSFVGLAFVPLQIWSK) the chain is on the extracellular side. Residues 60 to 74 (VLAISGIFTMGIALL) traverse the membrane as a helical segment. Topologically, residues 75 to 85 (GCVGALKELRC) are cytoplasmic. The helical transmembrane segment at 86 to 111 (LLGLYFGMLLLLFATQITLGILISTQ) threads the bilayer. At 112–241 (RAQLERSLRD…QGLQKWLHNN (130 aa)) the chain is on the extracellular side. N-linked (GlcNAc...) asparagine glycans are attached at residues Asn170, Asn183, and Asn188. A helical transmembrane segment spans residues 242–266 (LISIVGICLGVGLLELGFMTLSIFL). The Cytoplasmic portion of the chain corresponds to 267–281 (CRNLDHVYNRLARYR).

It belongs to the tetraspanin (TM4SF) family. As to quaternary structure, interacts with SCIMP. Interacts with SOCS3. Interacts with DECTIN1/CLEC7A. Post-translationally, tyrosine phosphorylated; leading to activation of downstream signaling pathways. B-lymphocytes. Antigen presenting cells.

The protein resides in the cell membrane. Functionally, structural component of specialized membrane microdomains known as tetraspanin-enriched microdomains (TERMs), which act as platforms for receptor clustering and signaling. Participates thereby in diverse biological functions such as cell signal transduction, adhesion, migration and protein trafficking. Upon ligand binding, two signaling pathways are activated, one acting through phosphorylation by LYN leading to cell death or a survival pathway with activation of GSK3B. Plays an essential role essential for clustering of integrin ITGA4/ITGB1 and promotes its mobility in the plasma membrane of B-cells. In turn, participates in ITGA4/ITGB1 integrin-mediated antiapoptotic signaling through AKT. Also plays a role in the migration of dendritic cells and neutrophils to draining lymph nodes, as well as in their integrin-mediated adhesion. Negatively regulates IL-6 responses through direct interaction with SOCS3 thereby preventing constitutive IL-6 signaling. Alternatively, inhibition of IL-6 signaling can also occur via interaction and stabilization of DECTIN1/CLEC7A at the cell membrane to inhibit its ability to promote the production of IL-6. The sequence is that of Leukocyte antigen CD37 (CD37) from Homo sapiens (Human).